A 1174-amino-acid chain; its full sequence is RecBCD enzyme subunit RecB (1174 aa).

A DNA-binding and helicase activity, interacts with RecC region spans residues 1–852 (MKIDSLKEKL…GGKTMNYEGL (852 aa)). One can recognise a UvrD-like helicase ATP-binding domain in the interval 4–449 (DSLKEKLNIF…YYLDTNWRSS (446 aa)). 25–32 (ASAGTGKT) contacts ATP. The UvrD-like helicase C-terminal domain maps to 479–745 (PSSKNLKMNF…KIITIHKSKG (267 aa)). The interval 900–1174 (TWSITSFSQL…LIKKTMTLIS (275 aa)) is nuclease activity, interacts with RecD and RecA. Positions 957, 1068, and 1081 each coordinate Mg(2+). Catalysis depends on Asp-1081, which acts as the For nuclease activity.

This sequence belongs to the helicase family. UvrD subfamily. In terms of assembly, heterotrimer of RecB, RecC and RecD. All subunits contribute to DNA-binding. Interacts with RecA. It depends on Mg(2+) as a cofactor.

The catalysed reaction is Exonucleolytic cleavage (in the presence of ATP) in either 5'- to 3'- or 3'- to 5'-direction to yield 5'-phosphooligonucleotides.. It catalyses the reaction Couples ATP hydrolysis with the unwinding of duplex DNA by translocating in the 3'-5' direction.. It carries out the reaction ATP + H2O = ADP + phosphate + H(+). A helicase/nuclease that prepares dsDNA breaks (DSB) for recombinational DNA repair. Binds to DSBs and unwinds DNA via a highly rapid and processive ATP-dependent bidirectional helicase activity. Unwinds dsDNA until it encounters a Chi (crossover hotspot instigator) sequence from the 3' direction. Cuts ssDNA a few nucleotides 3' to the Chi site. The properties and activities of the enzyme are changed at Chi. The Chi-altered holoenzyme produces a long 3'-ssDNA overhang and facilitates RecA-binding to the ssDNA for homologous DNA recombination and repair. Holoenzyme degrades any linearized DNA that is unable to undergo homologous recombination. In the holoenzyme this subunit contributes ATPase, 3'-5' helicase, exonuclease activity and loads RecA onto ssDNA. In Buchnera aphidicola subsp. Acyrthosiphon pisum (strain APS) (Acyrthosiphon pisum symbiotic bacterium), this protein is RecBCD enzyme subunit RecB.